A 788-amino-acid polypeptide reads, in one-letter code: Endonuclease MutS2 (788 aa).

Position 332 to 339 (332 to 339 (GPNTGGKT)) interacts with ATP. Positions 713–788 (VDLRGMDAEE…GTGVTVVELK (76 aa)) constitute a Smr domain.

The protein belongs to the DNA mismatch repair MutS family. MutS2 subfamily. As to quaternary structure, homodimer. Binds to stalled ribosomes, contacting rRNA.

Endonuclease that is involved in the suppression of homologous recombination and thus may have a key role in the control of bacterial genetic diversity. In terms of biological role, acts as a ribosome collision sensor, splitting the ribosome into its 2 subunits. Detects stalled/collided 70S ribosomes which it binds and splits by an ATP-hydrolysis driven conformational change. Acts upstream of the ribosome quality control system (RQC), a ribosome-associated complex that mediates the extraction of incompletely synthesized nascent chains from stalled ribosomes and their subsequent degradation. Probably generates substrates for RQC. This is Endonuclease MutS2 from Clostridium botulinum (strain ATCC 19397 / Type A).